Consider the following 183-residue polypeptide: Protein Syd (183 aa).

This sequence belongs to the Syd family.

It is found in the cell inner membrane. Functionally, interacts with the SecY protein in vivo. May bind preferentially to an uncomplexed state of SecY, thus functioning either as a chelating agent for excess SecY in the cell or as a regulatory factor that negatively controls the translocase function. The sequence is that of Protein Syd from Aliivibrio fischeri (strain ATCC 700601 / ES114) (Vibrio fischeri).